Consider the following 743-residue polypeptide: Catalase-peroxidase (743 aa).

Residues 1-15 (MSSDSRPPQPDTSTQ) show a composition bias toward polar residues. The segment at 1 to 40 (MSSDSRPPQPDTSTQSNSESESPAISSPTPQDHAPMTNRD) is disordered. Over residues 16–28 (SNSESESPAISSP) the composition is skewed to low complexity. Positions 110-233 (WHAAGTYRIQ…YGATTMGLIY (124 aa)) form a cross-link, tryptophyl-tyrosyl-methioninium (Trp-Tyr) (with M-259). His-111 acts as the Proton acceptor in catalysis. Positions 233–259 (YVNPEGPEGKPDPVAAAHDIRETFARM) form a cross-link, tryptophyl-tyrosyl-methioninium (Tyr-Met) (with W-110). A heme b-binding site is contributed by His-274. Residues 490 to 511 (DKRGGANGGRLRLEPQKSWESN) are disordered.

It belongs to the peroxidase family. Peroxidase/catalase subfamily. Homodimer or homotetramer. Heme b is required as a cofactor. Post-translationally, formation of the three residue Trp-Tyr-Met cross-link is important for the catalase, but not the peroxidase activity of the enzyme.

The enzyme catalyses H2O2 + AH2 = A + 2 H2O. The catalysed reaction is 2 H2O2 = O2 + 2 H2O. In terms of biological role, bifunctional enzyme with both catalase and broad-spectrum peroxidase activity. This is Catalase-peroxidase from Mycobacterium ulcerans (strain Agy99).